We begin with the raw amino-acid sequence, 419 residues long: Probable glycosidase C21B10.07 (419 aa).

2 disordered regions span residues 1-20 and 29-67; these read MGIP…AALS and DPAR…NNEN. A compositionally biased stretch (basic and acidic residues) spans 30-59; sequence PARKNESTNDVIDNHTDTEIDDHDNDHENL. The chain crosses the membrane as a helical span at residues 88–108; the sequence is FIWILIFIVALICSVLIGVLG. The 266-residue stretch at 122–387 folds into the GH16 domain; it reads PSYKAKTYSL…WAGSSVYSSA (266 aa). The active-site Nucleophile is the E237. The active-site Proton donor is E242.

This sequence belongs to the glycosyl hydrolase 16 family.

Its subcellular location is the membrane. This chain is Probable glycosidase C21B10.07, found in Schizosaccharomyces pombe (strain 972 / ATCC 24843) (Fission yeast).